A 65-amino-acid polypeptide reads, in one-letter code: Large ribosomal subunit protein bL35 (65 aa).

It belongs to the bacterial ribosomal protein bL35 family.

The protein is Large ribosomal subunit protein bL35 of Neisseria meningitidis serogroup A / serotype 4A (strain DSM 15465 / Z2491).